The sequence spans 115 residues: Large ribosomal subunit protein bL19 (115 aa).

Belongs to the bacterial ribosomal protein bL19 family.

Its function is as follows. This protein is located at the 30S-50S ribosomal subunit interface and may play a role in the structure and function of the aminoacyl-tRNA binding site. This Lachnospira eligens (strain ATCC 27750 / DSM 3376 / VPI C15-48 / C15-B4) (Eubacterium eligens) protein is Large ribosomal subunit protein bL19.